The following is a 306-amino-acid chain: Glutaminase (306 aa).

Ser64, Asn115, Glu159, Asn166, Tyr190, Tyr242, and Val260 together coordinate substrate.

This sequence belongs to the glutaminase family. In terms of assembly, homotetramer.

The catalysed reaction is L-glutamine + H2O = L-glutamate + NH4(+). The sequence is that of Glutaminase from Vibrio cholerae serotype O1 (strain ATCC 39315 / El Tor Inaba N16961).